Here is a 552-residue protein sequence, read N- to C-terminus: Lysine--tRNA ligase (552 aa).

The 'HIGH' region motif lies at 72–80; the sequence is PSGLPHLGT. Positions 320 to 324 match the 'KMSKS' region motif; the sequence is KISKS. Residue lysine 323 participates in ATP binding.

This sequence belongs to the class-I aminoacyl-tRNA synthetase family.

The protein resides in the cytoplasm. It carries out the reaction tRNA(Lys) + L-lysine + ATP = L-lysyl-tRNA(Lys) + AMP + diphosphate. The sequence is that of Lysine--tRNA ligase from Caulobacter vibrioides (strain ATCC 19089 / CIP 103742 / CB 15) (Caulobacter crescentus).